The sequence spans 256 residues: Small ribosomal subunit protein uS2 (256 aa).

The protein belongs to the universal ribosomal protein uS2 family.

This Streptococcus agalactiae serotype III (strain NEM316) protein is Small ribosomal subunit protein uS2.